A 196-amino-acid polypeptide reads, in one-letter code: dTTP/UTP pyrophosphatase (196 aa).

Residue Asp72 is the Proton acceptor of the active site.

The protein belongs to the Maf family. YhdE subfamily. A divalent metal cation is required as a cofactor.

Its subcellular location is the cytoplasm. The catalysed reaction is dTTP + H2O = dTMP + diphosphate + H(+). The enzyme catalyses UTP + H2O = UMP + diphosphate + H(+). Functionally, nucleoside triphosphate pyrophosphatase that hydrolyzes dTTP and UTP. May have a dual role in cell division arrest and in preventing the incorporation of modified nucleotides into cellular nucleic acids. The polypeptide is dTTP/UTP pyrophosphatase (Chlamydia felis (strain Fe/C-56) (Chlamydophila felis)).